The sequence spans 1236 residues: ABC transporter B family member 9 (1236 aa).

Residues 33 to 320 (MTVGTIAAAG…TSPSLNAFAA (288 aa)) enclose the ABC transmembrane type-1 1 domain. The next 6 helical transmembrane spans lie at 38–58 (IAAA…GQLI), 80–100 (FIYL…CWMV), 158–178 (QLLC…PLLA), 179–199 (GVLC…SLIM), 257–277 (ISGF…GLAV), and 288–308 (GYNG…GMSL). An ABC transporter 1 domain is found at 355 to 591 (IELKDVYFRY…PEGAYSQLVR (237 aa)). Residue 390–397 (GQSGSGKS) coordinates ATP. Asparagine 542 is a glycosylation site (N-linked (GlcNAc...) asparagine). A disordered region spans residues 593–616 (QEGSKEEATESERPETSLDVERSG). Over residues 594–616 (EGSKEEATESERPETSLDVERSG) the composition is skewed to basic and acidic residues. N-linked (GlcNAc...) asparagine glycans are attached at residues asparagine 631 and asparagine 653. Transmembrane regions (helical) follow at residues 685-705 (VLVL…IFGL), 725-745 (SHFW…MIPV), 785-805 (SLVG…TTGL), 806-826 (IIAF…SPFI), 902-922 (FSFF…AGLI), and 927-947 (ATFG…IGVS). One can recognise an ABC transmembrane type-1 2 domain in the interval 686–958 (LVLGSIAAMV…TSAMAPDSNK (273 aa)). The ABC transporter 2 domain maps to 993 to 1230 (IEFRHVSFRY…SGGAYASLVT (238 aa)). 1028 to 1035 (GESGSGKS) serves as a coordination point for ATP. Residues asparagine 1082 and asparagine 1181 are each glycosylated (N-linked (GlcNAc...) asparagine).

Belongs to the ABC transporter superfamily. ABCB family. Multidrug resistance exporter (TC 3.A.1.201) subfamily.

The protein localises to the membrane. The sequence is that of ABC transporter B family member 9 (ABCB9) from Arabidopsis thaliana (Mouse-ear cress).